The sequence spans 539 residues: Eukaryotic translation initiation factor 3 subunit L (539 aa).

Residues 306–514 form the PCI domain; sequence TFSDILLYIQ…IHIADTKVSH (209 aa).

This sequence belongs to the eIF-3 subunit L family. Component of the eukaryotic translation initiation factor 3 (eIF-3) complex. The eIF-3 complex interacts with pix.

It localises to the cytoplasm. Component of the eukaryotic translation initiation factor 3 (eIF-3) complex, which is involved in protein synthesis of a specialized repertoire of mRNAs and, together with other initiation factors, stimulates binding of mRNA and methionyl-tRNAi to the 40S ribosome. The eIF-3 complex specifically targets and initiates translation of a subset of mRNAs involved in cell proliferation. This Drosophila ananassae (Fruit fly) protein is Eukaryotic translation initiation factor 3 subunit L.